Consider the following 117-residue polypeptide: Large ribosomal subunit protein bL20c (117 aa).

It belongs to the bacterial ribosomal protein bL20 family.

It localises to the plastid. The protein resides in the chloroplast. In terms of biological role, binds directly to 23S ribosomal RNA and is necessary for the in vitro assembly process of the 50S ribosomal subunit. It is not involved in the protein synthesizing functions of that subunit. This Chloranthus spicatus (Chulantree) protein is Large ribosomal subunit protein bL20c.